The chain runs to 100 residues: Urease subunit gamma (100 aa).

Belongs to the urease gamma subunit family. As to quaternary structure, heterotrimer of UreA (gamma), UreB (beta) and UreC (alpha) subunits. Three heterotrimers associate to form the active enzyme.

Its subcellular location is the cytoplasm. It catalyses the reaction urea + 2 H2O + H(+) = hydrogencarbonate + 2 NH4(+). It participates in nitrogen metabolism; urea degradation; CO(2) and NH(3) from urea (urease route): step 1/1. The polypeptide is Urease subunit gamma (Cupriavidus taiwanensis (strain DSM 17343 / BCRC 17206 / CCUG 44338 / CIP 107171 / LMG 19424 / R1) (Ralstonia taiwanensis (strain LMG 19424))).